Consider the following 206-residue polypeptide: Small ribosomal subunit protein eS1 (206 aa).

The protein belongs to the eukaryotic ribosomal protein eS1 family.

This Methanocorpusculum labreanum (strain ATCC 43576 / DSM 4855 / Z) protein is Small ribosomal subunit protein eS1.